Reading from the N-terminus, the 299-residue chain is Oxygen-dependent coproporphyrinogen-III oxidase (299 aa).

Residue Ser-92 participates in substrate binding. A divalent metal cation is bound by residues His-96 and His-106. Catalysis depends on His-106, which acts as the Proton donor. Residue 108–110 (NVR) coordinates substrate. The a divalent metal cation site is built by His-145 and His-175. An important for dimerization region spans residues 240-275 (YVEFNLVWDRGTLFGLQTGGRTESILMSMPPLVRWE). 258 to 260 (GGR) lines the substrate pocket.

Belongs to the aerobic coproporphyrinogen-III oxidase family. Homodimer. The cofactor is a divalent metal cation.

The protein localises to the cytoplasm. The enzyme catalyses coproporphyrinogen III + O2 + 2 H(+) = protoporphyrinogen IX + 2 CO2 + 2 H2O. The protein operates within porphyrin-containing compound metabolism; protoporphyrin-IX biosynthesis; protoporphyrinogen-IX from coproporphyrinogen-III (O2 route): step 1/1. Its function is as follows. Involved in the heme biosynthesis. Catalyzes the aerobic oxidative decarboxylation of propionate groups of rings A and B of coproporphyrinogen-III to yield the vinyl groups in protoporphyrinogen-IX. The chain is Oxygen-dependent coproporphyrinogen-III oxidase from Salmonella dublin (strain CT_02021853).